A 285-amino-acid polypeptide reads, in one-letter code: Stress response regulator protein 1 (285 aa).

2 stretches are compositionally biased toward low complexity: residues 43-58 (DTSS…SSNN) and 128-138 (SIISSKSSNKS). Disordered regions lie at residues 43-66 (DTSS…SDQQ) and 114-142 (PLTP…TTVV). The 119-residue stretch at 158-276 (SFLIVDDNII…LDFMANSIDD (119 aa)) folds into the Response regulatory domain. D209 is modified (4-aspartylphosphate).

Required for stress adaptation, morphogenesis and virulence. This chain is Stress response regulator protein 1 (SRR1), found in Candida dubliniensis (strain CD36 / ATCC MYA-646 / CBS 7987 / NCPF 3949 / NRRL Y-17841) (Yeast).